Here is a 612-residue protein sequence, read N- to C-terminus: Lysophospholipase (612 aa).

The signal sequence occupies residues 1–9 (DITFAGVQR). The 548-residue stretch at 24–571 (SCPASRPTVR…DRYCWNGTVN (548 aa)) folds into the PLA2c domain. Residues Asn41, Asn81, Asn116, Asn150, Asn223, Asn267, Asn306, Asn335, Asn427, Asn440, Asn446, Asn477, Asn498, Asn526, Asn532, Asn567, and Asn571 are each glycosylated (N-linked (GlcNAc...) asparagine).

The protein belongs to the lysophospholipase family. In terms of processing, N-glycosylated.

It localises to the secreted. It catalyses the reaction a 1-acyl-sn-glycero-3-phosphocholine + H2O = sn-glycerol 3-phosphocholine + a fatty acid + H(+). Catalyzes the release of fatty acids from lysophospholipids. The chain is Lysophospholipase from Penicillium chrysogenum (Penicillium notatum).